The chain runs to 329 residues: Lipoyl synthase (329 aa).

Residues Cys72, Cys77, Cys83, Cys98, Cys102, Cys105, and Ser313 each contribute to the [4Fe-4S] cluster site. Positions 83–303 (CWSHGTATIM…QIGLKKGFFE (221 aa)) constitute a Radical SAM core domain.

It belongs to the radical SAM superfamily. Lipoyl synthase family. Requires [4Fe-4S] cluster as cofactor.

The protein localises to the cytoplasm. It carries out the reaction [[Fe-S] cluster scaffold protein carrying a second [4Fe-4S](2+) cluster] + N(6)-octanoyl-L-lysyl-[protein] + 2 oxidized [2Fe-2S]-[ferredoxin] + 2 S-adenosyl-L-methionine + 4 H(+) = [[Fe-S] cluster scaffold protein] + N(6)-[(R)-dihydrolipoyl]-L-lysyl-[protein] + 4 Fe(3+) + 2 hydrogen sulfide + 2 5'-deoxyadenosine + 2 L-methionine + 2 reduced [2Fe-2S]-[ferredoxin]. The protein operates within protein modification; protein lipoylation via endogenous pathway; protein N(6)-(lipoyl)lysine from octanoyl-[acyl-carrier-protein]: step 2/2. Functionally, catalyzes the radical-mediated insertion of two sulfur atoms into the C-6 and C-8 positions of the octanoyl moiety bound to the lipoyl domains of lipoate-dependent enzymes, thereby converting the octanoylated domains into lipoylated derivatives. This Legionella pneumophila (strain Paris) protein is Lipoyl synthase.